The primary structure comprises 230 residues: Ribonuclease 3 (230 aa).

An RNase III domain is found at 10-133 (DPRLLSRIGY…IIGAIYLDSS (124 aa)). Mg(2+) is bound at residue glutamate 46. Aspartate 50 is an active-site residue. Mg(2+) is bound by residues aspartate 119 and glutamate 122. Glutamate 122 is a catalytic residue. The DRBM domain maps to 161–230 (DPKSRLQEYL…AAEILKLLEQ (70 aa)).

It belongs to the ribonuclease III family. Homodimer. It depends on Mg(2+) as a cofactor.

The protein localises to the cytoplasm. It carries out the reaction Endonucleolytic cleavage to 5'-phosphomonoester.. In terms of biological role, digests double-stranded RNA. Involved in the processing of primary rRNA transcript to yield the immediate precursors to the large and small rRNAs (23S and 16S). Processes some mRNAs, and tRNAs when they are encoded in the rRNA operon. Processes pre-crRNA and tracrRNA of type II CRISPR loci if present in the organism. This is Ribonuclease 3 from Acinetobacter baumannii (strain SDF).